Here is a 135-residue protein sequence, read N- to C-terminus: Small ribosomal subunit protein bS16m/bS16c (135 aa).

The transit peptide at methionine 1–leucine 7 directs the protein to the chloroplast and mitochondrion. A disordered region spans residues proline 87 to alanine 135. The segment covering glutamine 124–alanine 135 has biased composition (basic and acidic residues).

Belongs to the bacterial ribosomal protein bS16 family. Component of the mitochondrial ribosome small subunit. As to expression, expressed at low levels in flowers, and, to a lower extent, in leaves, stems and roots.

It is found in the mitochondrion. The protein localises to the plastid. Its subcellular location is the chloroplast. This chain is Small ribosomal subunit protein bS16m/bS16c, found in Arabidopsis thaliana (Mouse-ear cress).